A 151-amino-acid chain; its full sequence is D-aminoacyl-tRNA deacylase (151 aa).

Residues 137–138 (GP) carry the Gly-cisPro motif, important for rejection of L-amino acids motif.

This sequence belongs to the DTD family. In terms of assembly, homodimer.

It is found in the cytoplasm. The enzyme catalyses glycyl-tRNA(Ala) + H2O = tRNA(Ala) + glycine + H(+). The catalysed reaction is a D-aminoacyl-tRNA + H2O = a tRNA + a D-alpha-amino acid + H(+). In terms of biological role, an aminoacyl-tRNA editing enzyme that deacylates mischarged D-aminoacyl-tRNAs. Also deacylates mischarged glycyl-tRNA(Ala), protecting cells against glycine mischarging by AlaRS. Acts via tRNA-based rather than protein-based catalysis; rejects L-amino acids rather than detecting D-amino acids in the active site. By recycling D-aminoacyl-tRNA to D-amino acids and free tRNA molecules, this enzyme counteracts the toxicity associated with the formation of D-aminoacyl-tRNA entities in vivo and helps enforce protein L-homochirality. This chain is D-aminoacyl-tRNA deacylase, found in Protochlamydia amoebophila (strain UWE25).